We begin with the raw amino-acid sequence, 734 residues long: Tripartite terminase subunit 3 (734 aa).

The Nuclear localization signal motif lies at 183–189 (PKKRAKV). The short motif at 258–265 (VPRRHGKT) is the Walker A motif element. A Walker B motif motif is present at residues 352–357 (LLFVDE). Residue Glu-357 is the For ATPase activity of the active site. Active-site for nuclease activity residues include Asp-509, Glu-581, and Asp-706.

The protein belongs to the herpesviridae TRM3 protein family. Interacts with the terminase subunits TRM1 and TRM2. Interacts with portal protein.

Its subcellular location is the host nucleus. Functionally, component of the molecular motor that translocates viral genomic DNA in empty capsid during DNA packaging. Forms a tripartite terminase complex together with TRM1 and TRM2 in the host cytoplasm. Once the complex reaches the host nucleus, it interacts with the capsid portal vertex. This portal forms a ring in which genomic DNA is translocated into the capsid. TRM3 carries an RNase H-like nuclease activity that plays an important role for the cleavage of concatemeric viral DNA into unit length genomes. This chain is Tripartite terminase subunit 3, found in Human herpesvirus 2 (strain HG52) (HHV-2).